The following is a 503-amino-acid chain: Probable cytosol aminopeptidase (503 aa).

Mn(2+) is bound by residues Lys-271 and Asp-276. Lys-283 is a catalytic residue. Mn(2+) is bound by residues Asp-294, Asp-353, and Glu-355. Arg-357 is a catalytic residue.

Belongs to the peptidase M17 family. It depends on Mn(2+) as a cofactor.

The protein resides in the cytoplasm. It carries out the reaction Release of an N-terminal amino acid, Xaa-|-Yaa-, in which Xaa is preferably Leu, but may be other amino acids including Pro although not Arg or Lys, and Yaa may be Pro. Amino acid amides and methyl esters are also readily hydrolyzed, but rates on arylamides are exceedingly low.. It catalyses the reaction Release of an N-terminal amino acid, preferentially leucine, but not glutamic or aspartic acids.. Presumably involved in the processing and regular turnover of intracellular proteins. Catalyzes the removal of unsubstituted N-terminal amino acids from various peptides. This chain is Probable cytosol aminopeptidase, found in Chlorobaculum parvum (strain DSM 263 / NCIMB 8327) (Chlorobium vibrioforme subsp. thiosulfatophilum).